Here is a 198-residue protein sequence, read N- to C-terminus: Putative pseudouridine methyltransferase (198 aa).

Positions 132 and 186 each coordinate S-adenosyl-L-methionine.

The protein belongs to the methyltransferase superfamily. TrmY family.

Its subcellular location is the cytoplasm. The sequence is that of Putative pseudouridine methyltransferase from Shewanella baltica (strain OS223).